Consider the following 476-residue polypeptide: Proline--tRNA ligase 2 (476 aa).

The protein belongs to the class-II aminoacyl-tRNA synthetase family. ProS type 3 subfamily. Homodimer.

The protein resides in the cytoplasm. The enzyme catalyses tRNA(Pro) + L-proline + ATP = L-prolyl-tRNA(Pro) + AMP + diphosphate. Its function is as follows. Catalyzes the attachment of proline to tRNA(Pro) in a two-step reaction: proline is first activated by ATP to form Pro-AMP and then transferred to the acceptor end of tRNA(Pro). The polypeptide is Proline--tRNA ligase 2 (Bacillus cereus (strain ATCC 10987 / NRS 248)).